Consider the following 1129-residue polypeptide: ISWI chromatin-remodeling complex ATPase ISW1 (1129 aa).

Residues 144 to 177 (KANGKGKGKHQDVRRRKTEHEEDAELLKEEDSDD) are disordered. A compositionally biased stretch (basic residues) spans 147–160 (GKGKGKHQDVRRRK). The segment covering 164–177 (EEDAELLKEEDSDD) has biased composition (acidic residues). The 166-residue stretch at 208–373 (VSLHKNKIAG…WALLNFLLPD (166 aa)) folds into the Helicase ATP-binding domain. 221 to 228 (DEMGLGKT) is an ATP binding site. The DEAH box motif lies at 324-327 (DEAH). Residues 506–657 (VLDKLLKKLK…QLVIQQNRTS (152 aa)) enclose the Helicase C-terminal domain. Residues 683 to 705 (FKSGTSTGSAGTPEPGSGEKGDD) form a disordered region. A Phosphothreonine modification is found at T694. S846 is modified (phosphoserine). SANT domains are found at residues 882–935 (EGFT…SNIE) and 988–1052 (NKRT…LLQC). Over residues 1073 to 1108 (KEDENGKRIREEFADQTANEKENVDGVESKKAKIED) the composition is skewed to basic and acidic residues. The segment at 1073–1129 (KEDENGKRIREEFADQTANEKENVDGVESKKAKIEDTSNVGTEQLVAEKIPENETTH) is disordered.

The protein belongs to the SNF2/RAD54 helicase family. ISWI subfamily. As to quaternary structure, component of the ISW1A complex, which at least consists of ISW1 and IOC3. Component of the ISW1B complex, which at least consists of ISW1, IOC2 and IOC4.

It localises to the nucleus. Functionally, catalytic component of ISW1-type complexes, which act by remodeling the chromatin by catalyzing an ATP-dependent alteration in the structure of nucleosomal DNA. They are involved in coordinating transcriptional repression, activation and elongation phases. The ISW1A complex represses gene expression at initiation through specific positioning of a promoter proximal dinucleosome. The ISW1B complex acts within coding regions to control the amount of RNA polymerase II released into productive elongation and to coordinate elongation with termination and pre-mRNA processing. The sequence is that of ISWI chromatin-remodeling complex ATPase ISW1 (ISW1) from Saccharomyces cerevisiae (strain ATCC 204508 / S288c) (Baker's yeast).